Here is a 132-residue protein sequence, read N- to C-terminus: Ragulator complex protein LAMTOR3 homolog (132 aa).

This sequence belongs to the LAMTOR3 family. In terms of assembly, part of the Ragulator complex.

Its function is as follows. Regulator of the TOR pathway, a signaling cascade that promotes cell growth in response to growth factors, energy levels, and amino acids. May activate the TOR signaling cascade in response to amino acids. In Dictyostelium discoideum (Social amoeba), this protein is Ragulator complex protein LAMTOR3 homolog.